The primary structure comprises 161 residues: Endoribonuclease YbeY (161 aa).

Zn(2+) is bound by residues H121, H125, and H131.

It belongs to the endoribonuclease YbeY family. The cofactor is Zn(2+).

Its subcellular location is the cytoplasm. Functionally, single strand-specific metallo-endoribonuclease involved in late-stage 70S ribosome quality control and in maturation of the 3' terminus of the 16S rRNA. This is Endoribonuclease YbeY from Xanthomonas euvesicatoria pv. vesicatoria (strain 85-10) (Xanthomonas campestris pv. vesicatoria).